Consider the following 261-residue polypeptide: Cytochrome c oxidase subunit 3 (261 aa).

Residues 1-15 (MTHQTHAYHMVNPSP) lie on the Mitochondrial matrix side of the membrane. Residues 16–34 (WPLTGALSALLMTSGLAMW) traverse the membrane as a helical segment. At 35-40 (FHYNLT) the chain is on the mitochondrial intermembrane side. Residues 41-66 (LLLTLGMTTNLLTMYQWWRDIIREST) form a helical membrane-spanning segment. Residues 67-72 (FQGHHT) lie on the Mitochondrial matrix side of the membrane. The helical transmembrane segment at 73–105 (PIVQKGLRYGMILFIISEVFFFAGFFWAFYHSS) threads the bilayer. Topologically, residues 106–128 (LAPTPELGGCWPPTGIIPLNPLE) are mitochondrial intermembrane. Residues 129–152 (VPLLNTSVLLASGVSITWAHHSLM) form a helical membrane-spanning segment. Residues 153–155 (EGN) lie on the Mitochondrial matrix side of the membrane. A helical transmembrane segment spans residues 156–183 (RKHMLQALFITISLGVYFTLLQASEYYE). The Mitochondrial intermembrane portion of the chain corresponds to 184 to 190 (TSFTISD). The chain crosses the membrane as a helical span at residues 191–223 (GVYGSTFFMATGFHGLHVIIGSTFLIVCFLRQL). The Mitochondrial matrix portion of the chain corresponds to 224 to 232 (KYHFTSNHH). The chain crosses the membrane as a helical span at residues 233–256 (FGFEAAAWYWHFVDVVWLFLYVSI). Over 257-261 (YWWGS) the chain is Mitochondrial intermembrane.

The protein belongs to the cytochrome c oxidase subunit 3 family. In terms of assembly, component of the cytochrome c oxidase (complex IV, CIV), a multisubunit enzyme composed of 14 subunits. The complex is composed of a catalytic core of 3 subunits MT-CO1, MT-CO2 and MT-CO3, encoded in the mitochondrial DNA, and 11 supernumerary subunits COX4I, COX5A, COX5B, COX6A, COX6B, COX6C, COX7A, COX7B, COX7C, COX8 and NDUFA4, which are encoded in the nuclear genome. The complex exists as a monomer or a dimer and forms supercomplexes (SCs) in the inner mitochondrial membrane with NADH-ubiquinone oxidoreductase (complex I, CI) and ubiquinol-cytochrome c oxidoreductase (cytochrome b-c1 complex, complex III, CIII), resulting in different assemblies (supercomplex SCI(1)III(2)IV(1) and megacomplex MCI(2)III(2)IV(2)).

Its subcellular location is the mitochondrion inner membrane. It carries out the reaction 4 Fe(II)-[cytochrome c] + O2 + 8 H(+)(in) = 4 Fe(III)-[cytochrome c] + 2 H2O + 4 H(+)(out). Component of the cytochrome c oxidase, the last enzyme in the mitochondrial electron transport chain which drives oxidative phosphorylation. The respiratory chain contains 3 multisubunit complexes succinate dehydrogenase (complex II, CII), ubiquinol-cytochrome c oxidoreductase (cytochrome b-c1 complex, complex III, CIII) and cytochrome c oxidase (complex IV, CIV), that cooperate to transfer electrons derived from NADH and succinate to molecular oxygen, creating an electrochemical gradient over the inner membrane that drives transmembrane transport and the ATP synthase. Cytochrome c oxidase is the component of the respiratory chain that catalyzes the reduction of oxygen to water. Electrons originating from reduced cytochrome c in the intermembrane space (IMS) are transferred via the dinuclear copper A center (CU(A)) of subunit 2 and heme A of subunit 1 to the active site in subunit 1, a binuclear center (BNC) formed by heme A3 and copper B (CU(B)). The BNC reduces molecular oxygen to 2 water molecules using 4 electrons from cytochrome c in the IMS and 4 protons from the mitochondrial matrix. This is Cytochrome c oxidase subunit 3 (MT-CO3) from Felis catus (Cat).